The following is a 215-amino-acid chain: Nascent polypeptide-associated complex subunit alpha (215 aa).

A disordered region spans residues 1 to 82; sequence MPGEATETVP…EKKARKAMSK (82 aa). Residues 9-28 show a composition bias toward polar residues; the sequence is VPVTEQEMQQPQAETGSGTE. Over residues 29-42 the composition is skewed to acidic residues; it reads SDSDESVPDLEEGD. Residues 44-57 are compositionally biased toward low complexity; the sequence is AQTQTQQAQLAAAA. The 66-residue stretch at 70–135 folds into the NAC-A/B domain; that stretch reads SRSEKKARKA…AKIEDLSQQA (66 aa). Position 166 is a phosphoserine (Ser-166). A UBA domain is found at 176-213; that stretch reads VEVKDIELVMSQANVSRAKAVRALKNNNNDIVNAIMEL.

Belongs to the NAC-alpha family.

Its function is as follows. May promote appropriate targeting of ribosome-nascent polypeptide complexes. This is Nascent polypeptide-associated complex subunit alpha (naca) from Danio rerio (Zebrafish).